Here is a 591-residue protein sequence, read N- to C-terminus: Alpha-(1-&gt;6)-mannopyranosyltransferase Rv1459c (591 aa).

13 helical membrane-spanning segments follow: residues 40-60, 80-100, 117-137, 201-221, 235-255, 259-279, 321-341, 367-387, 408-428, 441-461, 473-493, 502-522, and 527-547; these read FGATGTVLMAIGALGAGARPV, VSLTMTTTGAVMMALAWLMLG, TLLLWMLPLLIAPPMYSKDVY, IVAAVLCHRLVVLIGVTLIVW, VSALWLGAANPLLIMHLVAGI, ALMLGLMLTGVEFALRGLDMA, EWGPLAMLLAGSILITLSSQV, LLLAAAVMASLTLAIMAILGW, WMSPPTLLALGTGHVGILLGL, AIGVLIITVMVCWLLLAVLRG, LAVTVLLFPVVQPWYLLWAII, PGFRVAAILATLIVGIFGPTA, and FALFQIVDATAASAIIVILLI. The interval 569-591 is disordered; that stretch reads ESASKTPATRRPTAAPDAYADST. Over residues 574-584 the composition is skewed to low complexity; the sequence is TPATRRPTAAP.

It belongs to the MptA/B family.

Its subcellular location is the membrane. Catalyzes the addition of alpha-(1-&gt;6)-mannose residue. This Mycobacterium tuberculosis (strain ATCC 25618 / H37Rv) protein is Alpha-(1-&gt;6)-mannopyranosyltransferase Rv1459c.